We begin with the raw amino-acid sequence, 120 residues long: UPF0102 protein Moth_0988 (120 aa).

Belongs to the UPF0102 family.

This Moorella thermoacetica (strain ATCC 39073 / JCM 9320) protein is UPF0102 protein Moth_0988.